A 485-amino-acid chain; its full sequence is NADH-quinone oxidoreductase subunit N (485 aa).

A run of 14 helical transmembrane segments spans residues 8-28 (LIALSPLLIVGLTVVVVMLCI), 35-55 (FVNATMTVIGLNIALLSLYFV), 75-95 (FYTGLVLLASLATSTFAYPWL), 105-125 (FYLLVLIAALGGILLSSANHL), 127-147 (SLFIGIELLSLPLFGLVGYAF), 159-179 (YMLLSAAASSFLLFGMALIYA), 203-223 (LLAGLGMMIVGLGFKLSLVPF), 235-255 (PAPVSTFLATAGKIAVFGAVM), 271-291 (IVLSIIAFASIMFGNVMAVSQ), 297-317 (LLGYSSIAHLGYLLVALIAVQ), 326-346 (VGVYLVGYLFSSLGAFGVVSL), 374-394 (AVMTVMMLSLAGIPMTLGFFG), 407-426 (LWWLTGAVVLGSAIGLYYYL), and 449-469 (ALTAGGVVVLISSIVVLFFGL).

This sequence belongs to the complex I subunit 2 family. In terms of assembly, NDH-1 is composed of 13 different subunits. Subunits NuoA, H, J, K, L, M, N constitute the membrane sector of the complex.

It localises to the cell inner membrane. It carries out the reaction a quinone + NADH + 5 H(+)(in) = a quinol + NAD(+) + 4 H(+)(out). In terms of biological role, NDH-1 shuttles electrons from NADH, via FMN and iron-sulfur (Fe-S) centers, to quinones in the respiratory chain. The immediate electron acceptor for the enzyme in this species is believed to be ubiquinone. Couples the redox reaction to proton translocation (for every two electrons transferred, four hydrogen ions are translocated across the cytoplasmic membrane), and thus conserves the redox energy in a proton gradient. This is NADH-quinone oxidoreductase subunit N from Pectobacterium atrosepticum (strain SCRI 1043 / ATCC BAA-672) (Erwinia carotovora subsp. atroseptica).